A 243-amino-acid chain; its full sequence is Carboxy-S-adenosyl-L-methionine synthase (243 aa).

S-adenosyl-L-methionine contacts are provided by residues Y40, 65–67 (GCS), 90–91 (DN), 118–119 (DI), N133, and R200.

It belongs to the class I-like SAM-binding methyltransferase superfamily. Cx-SAM synthase family. In terms of assembly, homodimer.

It catalyses the reaction prephenate + S-adenosyl-L-methionine = carboxy-S-adenosyl-L-methionine + 3-phenylpyruvate + H2O. In terms of biological role, catalyzes the conversion of S-adenosyl-L-methionine (SAM) to carboxy-S-adenosyl-L-methionine (Cx-SAM). This is Carboxy-S-adenosyl-L-methionine synthase from Shewanella sp. (strain W3-18-1).